Here is a 100-residue protein sequence, read N- to C-terminus: Small ribosomal subunit protein uS14c (100 aa).

This sequence belongs to the universal ribosomal protein uS14 family. Part of the 30S ribosomal subunit.

It is found in the plastid. Its subcellular location is the chloroplast. Its function is as follows. Binds 16S rRNA, required for the assembly of 30S particles. The sequence is that of Small ribosomal subunit protein uS14c from Arabis hirsuta (Hairy rock-cress).